Consider the following 122-residue polypeptide: Nuclear transcription factor Y subunit beta (122 aa).

Residues 1 to 12 (VQECVSEFISFI) form a subunit association domain (SAD) region. The b domain stretch occupies residues 1–57 (VQECVSEFISFITSEASERCHQEKRKTINGEDILFAMSTLGFDSYVEPLKLYLQKFR). The segment at 58–122 (EAMKGEKGIG…ISGVQQIQFS (65 aa)) is c domain.

This sequence belongs to the NFYB/HAP3 subunit family. In terms of assembly, heterotrimeric transcription factor composed of three components, NF-YA, NF-YB and NF-YC. NF-YB and NF-YC must interact and dimerize for NF-YA association and DNA binding.

The protein resides in the nucleus. Its function is as follows. Component of the sequence-specific heterotrimeric transcription factor (NF-Y) which specifically recognizes a 5'-CCAAT-3' box motif found in the promoters of its target genes. NF-Y can function as both an activator and a repressor, depending on its interacting cofactors. This Xenopus laevis (African clawed frog) protein is Nuclear transcription factor Y subunit beta (nfyb).